A 230-amino-acid polypeptide reads, in one-letter code: Heptaprenylglyceryl phosphate synthase (230 aa).

Lys-12 is a sn-glycerol 1-phosphate binding site. Residues Asp-14 and Thr-40 each contribute to the Mg(2+) site. Residues 159–164 (YIEYSG), Gly-189, and 209–210 (GD) each bind sn-glycerol 1-phosphate.

It belongs to the GGGP/HepGP synthase family. Group I subfamily. Homodimer. It depends on Mg(2+) as a cofactor.

The enzyme catalyses sn-glycerol 1-phosphate + all-trans-heptaprenyl diphosphate = 3-heptaprenyl-sn-glycero-1-phosphate + diphosphate. It functions in the pathway membrane lipid metabolism; glycerophospholipid metabolism. Prenyltransferase that catalyzes in vivo the transfer of the heptaprenyl moiety of heptaprenyl pyrophosphate (HepPP; 35 carbon atoms) to the C3 hydroxyl of sn-glycerol-1-phosphate (G1P), producing heptaprenylglyceryl phosphate (HepGP). This reaction is an ether-bond-formation step in the biosynthesis of archaea-type G1P-based membrane lipids found in Bacillales. In Staphylococcus aureus (strain bovine RF122 / ET3-1), this protein is Heptaprenylglyceryl phosphate synthase.